Here is a 263-residue protein sequence, read N- to C-terminus: Killer cell lectin-like receptor 4 (263 aa).

At 1 to 44 (MTEQEDTFSAVRFHKSSGLQNEMRLKETRKPEKARLRVCSVPWQ) the chain is on the cytoplasmic side. Residues 45 to 65 (LIVIALGILISLRLVTVAVLM) form a helical; Signal-anchor for type II membrane protein membrane-spanning segment. The Extracellular segment spans residues 66-263 (TNIFQYGQQK…CGKRLDKFPH (198 aa)). 2 N-linked (GlcNAc...) asparagine glycosylation sites follow: asparagine 87 and asparagine 104. A C-type lectin domain is found at 139-258 (GVKVYWFCYG…SFICICGKRL (120 aa)). 4 disulfides stabilise this stretch: cysteine 146–cysteine 151, cysteine 164–cysteine 252, cysteine 168–cysteine 254, and cysteine 233–cysteine 246. Residues asparagine 170 and asparagine 222 are each glycosylated (N-linked (GlcNAc...) asparagine).

Homodimer; disulfide-linked. Interacts with the adapter protein TYROBP/DAP12; the interaction leads to natural killer cell activation.

The protein localises to the cell membrane. In terms of biological role, receptor on natural killer (NK) cells for class I MHC. The sequence is that of Killer cell lectin-like receptor 4 (Klra4) from Mus musculus (Mouse).